The sequence spans 189 residues: Probable pericyclase scpY (189 aa).

The protein belongs to the pericyclase pydY family.

It participates in mycotoxin biosynthesis. In terms of biological role, probable pericyclase; part of the gene scp cluster that mediates the biosynthesis of a hirsutellone-like compound that has still to be identified. In Mollisia scopiformis (Conifer needle endophyte fungus), this protein is Probable pericyclase scpY.